Reading from the N-terminus, the 801-residue chain is Conserved oligomeric Golgi complex subunit 4 (801 aa).

The interval 397-427 (IRSPSGDGDDEENEEARQERHRLRKEAKEQK) is disordered.

It belongs to the COG4 family. In terms of assembly, component of the conserved oligomeric Golgi complex which is composed of eight different subunits and is required for normal Golgi morphology and localization.

It is found in the golgi apparatus membrane. Its function is as follows. Required for normal Golgi function. The chain is Conserved oligomeric Golgi complex subunit 4 (cogc-4) from Caenorhabditis elegans.